The following is an 853-amino-acid chain: Guanine nucleotide exchange protein smcr8a (853 aa).

Residues Thr-47–Asn-219 form the uDENN FLCN/SMCR8-type domain. Disordered stretches follow at residues Pro-272–Ser-298 and Leu-418–Ser-454. The span at Asp-280–Ser-298 shows a compositional bias: polar residues. Positions Arg-316–Thr-753 constitute a cDENN FLCN/SMCR8-type domain. Low complexity predominate over residues Gly-421–Ser-432. Residues Thr-433–Ser-454 show a composition bias toward polar residues. Positions Phe-762 to Lys-826 constitute a dDENN FLCN/SMCR8-type domain.

The protein belongs to the SMCR8 family. In terms of assembly, component of the C9orf72-SMCR8 complex. The C9orf72-SMCR8 complex associates with the ATG1/ULK1 kinase complex.

It localises to the cytoplasm. It is found in the nucleus. In terms of biological role, component of the C9orf72-SMCR8 complex, a complex that has guanine nucleotide exchange factor (GEF) activity and regulates autophagy. In the complex, C9orf72 and SMCR8 probably constitute the catalytic subunits that promote the exchange of GDP to GTP, converting inactive GDP-bound RAB8A and RAB39B into their active GTP-bound form, thereby promoting autophagosome maturation. The C9orf72-SMCR8 complex also acts as a negative regulator of autophagy initiation by interacting with the ATG1/ULK1 kinase complex and inhibiting its protein kinase activity. The chain is Guanine nucleotide exchange protein smcr8a (smcr8a) from Danio rerio (Zebrafish).